The chain runs to 166 residues: MSNNDQKRDEGYIEKLVQVNRVAKTVKGGRIFTFTALTVVGDGKGRVGFGRGKSREVPAAIQKAMEAARRNMIQVDLNGTTLQYAMKSAHGASKVYMQPASEGTGIIAGGAMRAVLEVAGVQNVLAKCYGSTNPVNVVHATFKGLKAMQSPESIAAKRGLTVKEIF.

Residues Y12–V75 enclose the S5 DRBM domain.

This sequence belongs to the universal ribosomal protein uS5 family. Part of the 30S ribosomal subunit. Contacts proteins S4 and S8.

With S4 and S12 plays an important role in translational accuracy. In terms of biological role, located at the back of the 30S subunit body where it stabilizes the conformation of the head with respect to the body. This is Small ribosomal subunit protein uS5 from Pseudomonas fluorescens (strain SBW25).